A 702-amino-acid polypeptide reads, in one-letter code: Ribosomal RNA large subunit methyltransferase K/L (702 aa).

One can recognise a THUMP domain in the interval 43–154 (LVYQSLMWSR…KETASIALDL (112 aa)).

The protein belongs to the methyltransferase superfamily. RlmKL family.

It localises to the cytoplasm. The enzyme catalyses guanosine(2445) in 23S rRNA + S-adenosyl-L-methionine = N(2)-methylguanosine(2445) in 23S rRNA + S-adenosyl-L-homocysteine + H(+). The catalysed reaction is guanosine(2069) in 23S rRNA + S-adenosyl-L-methionine = N(2)-methylguanosine(2069) in 23S rRNA + S-adenosyl-L-homocysteine + H(+). Specifically methylates the guanine in position 2445 (m2G2445) and the guanine in position 2069 (m7G2069) of 23S rRNA. This Escherichia coli O1:K1 / APEC protein is Ribosomal RNA large subunit methyltransferase K/L.